Consider the following 364-residue polypeptide: Aminomethyltransferase (364 aa).

It belongs to the GcvT family. The glycine cleavage system is composed of four proteins: P, T, L and H.

The enzyme catalyses N(6)-[(R)-S(8)-aminomethyldihydrolipoyl]-L-lysyl-[protein] + (6S)-5,6,7,8-tetrahydrofolate = N(6)-[(R)-dihydrolipoyl]-L-lysyl-[protein] + (6R)-5,10-methylene-5,6,7,8-tetrahydrofolate + NH4(+). Its function is as follows. The glycine cleavage system catalyzes the degradation of glycine. This chain is Aminomethyltransferase, found in Shewanella piezotolerans (strain WP3 / JCM 13877).